The following is a 423-amino-acid chain: UPF0229 protein PSPTO_0546 (423 aa).

A disordered region spans residues 65 to 110; it reads HHGRGGKQTVVHPGNKEFTTGEHIARPQGGAGGKGPGKAGNSGEGM. The span at 93–107 shows a compositional bias: gly residues; the sequence is GGAGGKGPGKAGNSG.

This sequence belongs to the UPF0229 family.

This chain is UPF0229 protein PSPTO_0546, found in Pseudomonas syringae pv. tomato (strain ATCC BAA-871 / DC3000).